Here is a 228-residue protein sequence, read N- to C-terminus: Lipoprotein-releasing system ATP-binding protein LolD (228 aa).

In terms of domain architecture, ABC transporter spans 6-228 (LRCKELSKSY…KNGILHKEQG (223 aa)). 42-49 (GASGSGKS) serves as a coordination point for ATP.

It belongs to the ABC transporter superfamily. Lipoprotein translocase (TC 3.A.1.125) family. The complex is composed of two ATP-binding proteins (LolD) and two transmembrane proteins (LolC and LolE).

It localises to the cell inner membrane. Functionally, part of the ABC transporter complex LolCDE involved in the translocation of mature outer membrane-directed lipoproteins, from the inner membrane to the periplasmic chaperone, LolA. Responsible for the formation of the LolA-lipoprotein complex in an ATP-dependent manner. This Idiomarina loihiensis (strain ATCC BAA-735 / DSM 15497 / L2-TR) protein is Lipoprotein-releasing system ATP-binding protein LolD.